The following is a 206-amino-acid chain: Uracil phosphoribosyltransferase (206 aa).

5-phospho-alpha-D-ribose 1-diphosphate is bound by residues arginine 76, arginine 101, and 128-136; that span reads DPMLATGTT. Uracil is bound by residues isoleucine 191 and 196–198; that span reads GDA. Aspartate 197 lines the 5-phospho-alpha-D-ribose 1-diphosphate pocket.

This sequence belongs to the UPRTase family. Mg(2+) is required as a cofactor.

It carries out the reaction UMP + diphosphate = 5-phospho-alpha-D-ribose 1-diphosphate + uracil. It participates in pyrimidine metabolism; UMP biosynthesis via salvage pathway; UMP from uracil: step 1/1. With respect to regulation, allosterically activated by GTP. Its function is as follows. Catalyzes the conversion of uracil and 5-phospho-alpha-D-ribose 1-diphosphate (PRPP) to UMP and diphosphate. The protein is Uracil phosphoribosyltransferase of Mycoplasma genitalium (strain ATCC 33530 / DSM 19775 / NCTC 10195 / G37) (Mycoplasmoides genitalium).